We begin with the raw amino-acid sequence, 827 residues long: Villin-1 (827 aa).

The necessary for homodimerization stretch occupies residues 1–126 (MTKLNAQVKG…IRKGGVASGM (126 aa)). The interval 1-734 (MTKLNAQVKG…YDDLKAELGN (734 aa)) is core. One copy of the Gelsolin-like 1 repeat lies at 27–76 (MQMVPVPSSTFGSFFDGDCYVVLAIHKTSSTLSYDIHYWIGQDSSQDEQG). 2 LPA/PIP2-binding site regions span residues 112–119 (KQGLVIRK) and 138–146 (RLLHVKGKR). Gelsolin-like repeat units lie at residues 148–188 (VLAG…MERL) and 265–309 (LVVR…QERS). S366 is modified (phosphoserine). Gelsolin-like repeat units lie at residues 407–457 (DLEL…DEIA), 528–568 (TKAF…DERE), and 631–672 (FLAT…EEKK). Phosphoserine occurs at positions 735 and 776. Positions 735–827 (SGDWSQIADE…QNIKKEKGLF (93 aa)) are headpiece. Residues 761–827 (SGPLPTFPLE…QNIKKEKGLF (67 aa)) form the HP domain. The interval 816-824 (KQQNIKKEK) is LPA/PIP2-binding site 3.

It belongs to the villin/gelsolin family. Monomer. Homodimer; homodimerization is necessary for actin-bundling. Associates with F-actin; phosphorylation at tyrosine residues decreases the association with F-actin. Interacts (phosphorylated at C-terminus tyrosine phosphorylation sites) with PLCG1 (via the SH2 domains). Interacts (phosphorylated form) with PLCG1; the interaction is enhanced by hepatocyte growth factor (HGF). Post-translationally, phosphorylated on tyrosine residues by SRC. The unphosphorylated form increases the initial rate of actin-nucleating activity, whereas the tyrosine phosphorylated form inhibits actin-nucleating activity, enhances actin-bundling activity and enhances actin-severing activity by reducing high Ca(2+) requirements. The tyrosine phosphorylated form does not regulate actin-capping activity. Tyrosine phosphorylation is essential for cell migration: tyrosine phosphorylation sites in the N-terminus half regulate actin reorganization and cell morphology, whereas tyrosine phosphorylation sites in the C-terminus half regulate cell migration via interaction with PLCG1. Tyrosine phosphorylation is induced by epidermal growth factor (EGF) and stimulates cell migration. In terms of tissue distribution, expressed in small intestin, colon, kidney and enterocytes (at protein level).

The protein localises to the cytoplasm. It is found in the cytoskeleton. The protein resides in the cell projection. It localises to the microvillus. Its subcellular location is the lamellipodium. The protein localises to the ruffle. It is found in the filopodium tip. The protein resides in the filopodium. Functionally, epithelial cell-specific Ca(2+)-regulated actin-modifying protein that modulates the reorganization of microvillar actin filaments. Plays a role in the actin nucleation, actin filament bundle assembly, actin filament capping and severing. Binds phosphatidylinositol 4,5-bisphosphate (PIP2) and lysophosphatidic acid (LPA); binds LPA with higher affinity than PIP2. Binding to LPA increases its phosphorylation by SRC and inhibits all actin-modifying activities. Binding to PIP2 inhibits actin-capping and -severing activities but enhances actin-bundling activity. Regulates the intestinal epithelial cell morphology, cell invasion, cell migration and apoptosis. Protects against apoptosis induced by dextran sodium sulfate (DSS) in the gastrointestinal epithelium. Appears to regulate cell death by maintaining mitochondrial integrity. Enhances hepatocyte growth factor (HGF)-induced epithelial cell motility, chemotaxis and wound repair. Upon S.flexneri cell infection, its actin-severing activity enhances actin-based motility of the bacteria and plays a role during the dissemination. The protein is Villin-1 (Vil1) of Mus musculus (Mouse).